The sequence spans 376 residues: Putative glutamate--cysteine ligase 2-1 (376 aa).

The protein belongs to the glutamate--cysteine ligase type 2 family. YbdK subfamily.

The enzyme catalyses L-cysteine + L-glutamate + ATP = gamma-L-glutamyl-L-cysteine + ADP + phosphate + H(+). ATP-dependent carboxylate-amine ligase which exhibits weak glutamate--cysteine ligase activity. This is Putative glutamate--cysteine ligase 2-1 from Rubrobacter xylanophilus (strain DSM 9941 / JCM 11954 / NBRC 16129 / PRD-1).